Here is a 631-residue protein sequence, read N- to C-terminus: tRNA uridine 5-carboxymethylaminomethyl modification enzyme MnmG (631 aa).

Residues 13 to 18 (GGGHAG), valine 125, and serine 180 contribute to the FAD site. 273–287 (GPRYCPSIEDKVMRF) is a binding site for NAD(+). Glutamine 370 is an FAD binding site.

It belongs to the MnmG family. As to quaternary structure, homodimer. Heterotetramer of two MnmE and two MnmG subunits. FAD serves as cofactor.

It localises to the cytoplasm. In terms of biological role, NAD-binding protein involved in the addition of a carboxymethylaminomethyl (cmnm) group at the wobble position (U34) of certain tRNAs, forming tRNA-cmnm(5)s(2)U34. This chain is tRNA uridine 5-carboxymethylaminomethyl modification enzyme MnmG, found in Vibrio parahaemolyticus serotype O3:K6 (strain RIMD 2210633).